We begin with the raw amino-acid sequence, 512 residues long: Histidine ammonia-lyase (512 aa).

Residues 142–144 constitute a cross-link (5-imidazolinone (Ala-Gly)); that stretch reads ASG. Position 143 is a 2,3-didehydroalanine (Ser) (Ser-143).

It belongs to the PAL/histidase family. In terms of processing, contains an active site 4-methylidene-imidazol-5-one (MIO), which is formed autocatalytically by cyclization and dehydration of residues Ala-Ser-Gly.

The protein resides in the cytoplasm. It catalyses the reaction L-histidine = trans-urocanate + NH4(+). It functions in the pathway amino-acid degradation; L-histidine degradation into L-glutamate; N-formimidoyl-L-glutamate from L-histidine: step 1/3. The protein is Histidine ammonia-lyase of Bartonella henselae (strain ATCC 49882 / DSM 28221 / CCUG 30454 / Houston 1) (Rochalimaea henselae).